The following is a 288-amino-acid chain: Probable ketoamine kinase VC_1539 (288 aa).

An ATP-binding site is contributed by 92–94 (NYL). The active-site Proton acceptor is the D195.

This sequence belongs to the fructosamine kinase family.

Functionally, ketoamine kinase that phosphorylates ketoamines on the third carbon of the sugar moiety to generate ketoamine 3-phosphate. In Vibrio cholerae serotype O1 (strain ATCC 39315 / El Tor Inaba N16961), this protein is Probable ketoamine kinase VC_1539.